A 299-amino-acid polypeptide reads, in one-letter code: Ethylmalonyl-CoA decarboxylase (299 aa).

It belongs to the enoyl-CoA hydratase/isomerase family.

The protein localises to the cytoplasm. The protein resides in the cytosol. It carries out the reaction (2S)-ethylmalonyl-CoA + H(+) = butanoyl-CoA + CO2. It catalyses the reaction (S)-methylmalonyl-CoA + H(+) = propanoyl-CoA + CO2. The catalysed reaction is (2R)-ethylmalonyl-CoA + H(+) = butanoyl-CoA + CO2. Functionally, decarboxylates ethylmalonyl-CoA, a potentially toxic metabolite, to form butyryl-CoA, suggesting it might be involved in metabolite proofreading. Acts preferentially on (S)-ethylmalonyl-CoA but also has some activity on the (R)-isomer. Also has methylmalonyl-CoA decarboxylase activity at lower level. In Xenopus laevis (African clawed frog), this protein is Ethylmalonyl-CoA decarboxylase (echdc1).